The following is a 396-amino-acid chain: NADH-quinone oxidoreductase subunit D (396 aa).

It belongs to the complex I 49 kDa subunit family. As to quaternary structure, NDH-1 is composed of 14 different subunits. Subunits NuoB, C, D, E, F, and G constitute the peripheral sector of the complex.

It is found in the cell inner membrane. It catalyses the reaction a quinone + NADH + 5 H(+)(in) = a quinol + NAD(+) + 4 H(+)(out). Functionally, NDH-1 shuttles electrons from NADH, via FMN and iron-sulfur (Fe-S) centers, to quinones in the respiratory chain. The immediate electron acceptor for the enzyme in this species is believed to be ubiquinone. Couples the redox reaction to proton translocation (for every two electrons transferred, four hydrogen ions are translocated across the cytoplasmic membrane), and thus conserves the redox energy in a proton gradient. This Methylobacterium sp. (strain 4-46) protein is NADH-quinone oxidoreductase subunit D.